We begin with the raw amino-acid sequence, 509 residues long: Probable cytochrome P450 4ac3 (509 aa).

Heme is bound at residue cysteine 454.

Belongs to the cytochrome P450 family. Requires heme as cofactor.

Its subcellular location is the endoplasmic reticulum membrane. It is found in the microsome membrane. May be involved in the metabolism of insect hormones and in the breakdown of synthetic insecticides. This chain is Probable cytochrome P450 4ac3 (Cyp4ac3), found in Drosophila melanogaster (Fruit fly).